A 502-amino-acid chain; its full sequence is Glycerol kinase (502 aa).

Thr14 contacts ADP. Residues Thr14, Thr15, and Ser16 each contribute to the ATP site. Thr14 lines the sn-glycerol 3-phosphate pocket. Arg18 contributes to the ADP binding site. Sn-glycerol 3-phosphate is bound by residues Arg84, Glu85, Tyr136, and Asp246. Residues Arg84, Glu85, Tyr136, Asp246, and Gln247 each contribute to the glycerol site. Residues Thr268 and Gly311 each coordinate ADP. Positions 268, 311, 315, and 412 each coordinate ATP. Gly412 and Asn416 together coordinate ADP.

It belongs to the FGGY kinase family. As to quaternary structure, homotetramer and homodimer (in equilibrium). Heterodimer with EIIA-Glc. Binds 1 zinc ion per glycerol kinase EIIA-Glc dimer. The zinc ion is important for dimerization.

It catalyses the reaction glycerol + ATP = sn-glycerol 3-phosphate + ADP + H(+). The protein operates within polyol metabolism; glycerol degradation via glycerol kinase pathway; sn-glycerol 3-phosphate from glycerol: step 1/1. With respect to regulation, activity of this regulatory enzyme is affected by several metabolites. Allosterically and non-competitively inhibited by fructose 1,6-bisphosphate (FBP) and unphosphorylated phosphocarrier protein EIIA-Glc (III-Glc), an integral component of the bacterial phosphotransferase (PTS) system. Its function is as follows. Key enzyme in the regulation of glycerol uptake and metabolism. Catalyzes the phosphorylation of glycerol to yield sn-glycerol 3-phosphate. The chain is Glycerol kinase from Citrobacter koseri (strain ATCC BAA-895 / CDC 4225-83 / SGSC4696).